A 163-amino-acid chain; its full sequence is Phosphopantetheine adenylyltransferase (163 aa).

Thr10 is a binding site for substrate. Residues 10 to 11 and His18 contribute to the ATP site; that span reads TF. Substrate contacts are provided by Lys42, Leu74, and Arg88. ATP-binding positions include 89–91, Glu99, and 124–130; these read GLR and NSFISST.

This sequence belongs to the bacterial CoaD family. In terms of assembly, homohexamer. It depends on Mg(2+) as a cofactor.

It is found in the cytoplasm. It carries out the reaction (R)-4'-phosphopantetheine + ATP + H(+) = 3'-dephospho-CoA + diphosphate. Its pathway is cofactor biosynthesis; coenzyme A biosynthesis; CoA from (R)-pantothenate: step 4/5. Reversibly transfers an adenylyl group from ATP to 4'-phosphopantetheine, yielding dephospho-CoA (dPCoA) and pyrophosphate. The chain is Phosphopantetheine adenylyltransferase from Shewanella putrefaciens (strain CN-32 / ATCC BAA-453).